We begin with the raw amino-acid sequence, 252 residues long: Mediator of RNA polymerase II transcription subunit 4 (252 aa).

Residues 70 to 112 (KIHQEMQVLEKEVEKRDSDIQQLQKQLKEAEHILATAVYQAKE) adopt a coiled-coil conformation. The tract at residues 218-252 (HSNEFLMESLGPNKENEEDVEVMSTDSSSSSSDSD) is disordered. The span at 241-252 (STDSSSSSSDSD) shows a compositional bias: low complexity.

Belongs to the Mediator complex subunit 4 family. Component of the Mediator complex.

Its subcellular location is the nucleus. Its function is as follows. Component of the Mediator complex, a coactivator involved in the regulated transcription of nearly all RNA polymerase II-dependent genes. Mediator functions as a bridge to convey information from gene-specific regulatory proteins to the basal RNA polymerase II transcription machinery. Mediator is recruited to promoters by direct interactions with regulatory proteins and serves as a scaffold for the assembly of a functional preinitiation complex with RNA polymerase II and the general transcription factors. This Xenopus tropicalis (Western clawed frog) protein is Mediator of RNA polymerase II transcription subunit 4 (med4).